The sequence spans 699 residues: D-(-)-3-hydroxybutyrate oligomer hydrolase (699 aa).

An N-terminal signal peptide occupies residues M1–A33. Catalysis depends on S311, which acts as the Charge relay system.

Belongs to the D-(-)-3-hydroxybutyrate oligomer hydrolase family.

The protein resides in the secreted. It catalyses the reaction (3R)-hydroxybutanoate dimer + H2O = 2 (R)-3-hydroxybutanoate + H(+). The protein operates within lipid metabolism; butanoate metabolism. Participates in the degradation of poly-3-hydroxybutyrate (PHB). It works downstream of poly(3-hydroxybutyrate) depolymerase, hydrolyzing D(-)-3-hydroxybutyrate oligomers of various length (3HB-oligomers) into 3HB-monomers. In Burkholderia pseudomallei (strain 1710b), this protein is D-(-)-3-hydroxybutyrate oligomer hydrolase.